The following is a 225-amino-acid chain: UPF0758 protein BCB4264_A4572 (225 aa).

Positions serine 103–isoleucine 225 constitute an MPN domain. Zn(2+)-binding residues include histidine 174, histidine 176, and aspartate 187. A JAMM motif motif is present at residues histidine 174–aspartate 187.

Belongs to the UPF0758 family.

The chain is UPF0758 protein BCB4264_A4572 from Bacillus cereus (strain B4264).